A 176-amino-acid polypeptide reads, in one-letter code: Glyoxalase domain-containing protein RDO1 (176 aa).

Positions 53 to 172 constitute a VOC domain; it reads SLDHLVITCH…DNNLIELSSY (120 aa). The active-site Proton donor/acceptor is glutamate 168.

The protein belongs to the glyoxalase I family.

The protein operates within secondary metabolite biosynthesis. Its function is as follows. Glyoxalase domain-containing protein; part of the gene cluster that mediates the biosynthesis of itaconic acid and 2-hydroxyparaconate. Cis-aconitate is secreted by the mitochondrial tricarboxylate transporter MTT1. In the cytosol cis-aconitate is converted into trans-aconitate via isomerization by the aconitate-delta-isomerase ADI1. Decarboxylation of trans-aconitate by the trans-aconitate decarboxylase TAD1 then leads then to the production of itaconic acid. The cytochrome P450 monooxygenase CYP3 further converts itaconate to 2-hydroxyparaconate via oxidation of the double bond, leading to a transient epoxide, which can subsequently be lactonized to produce 2-hydroxyparaconate. Secretion of itaconate and possibly 2-hydroxyparaconate into the medium is mediated by the major facilitator ITP1. The glyoxalase domain-containing protein RDO1 is not involved in the biosynthesis of itaconate and 2-hydroxyparaconate, however, it might play a role in the further conversion of 2-hydroxyparaconate to itatartarate. The chain is Glyoxalase domain-containing protein RDO1 from Mycosarcoma maydis (Corn smut fungus).